Consider the following 466-residue polypeptide: Soluble pyridine nucleotide transhydrogenase (466 aa).

36-45 contacts FAD; sequence ERYQNVGGGC.

Belongs to the class-I pyridine nucleotide-disulfide oxidoreductase family. Requires FAD as cofactor.

The protein resides in the cytoplasm. It carries out the reaction NAD(+) + NADPH = NADH + NADP(+). Conversion of NADPH, generated by peripheral catabolic pathways, to NADH, which can enter the respiratory chain for energy generation. In Escherichia coli O127:H6 (strain E2348/69 / EPEC), this protein is Soluble pyridine nucleotide transhydrogenase.